The chain runs to 494 residues: Sphingosine-1-phosphate transporter MFSD2B (494 aa).

Pro residues predominate over residues 1-12 (MSVPHGPTPAPV). The segment at 1–26 (MSVPHGPTPAPVAEPHTQEPGSDKRD) is disordered. Helical transmembrane passes span 103-123 (LMPW…FLWF), 140-160 (CLFQ…TMIL), 179-199 (MAGT…AHGS), 223-243 (IAAA…CLGV), 277-297 (VVSF…LVLF), 310-330 (NLVL…EWVL), 339-359 (AFGI…PSAP), 360-380 (VAYV…LLPW), 402-422 (TIFY…ALGI), and 449-469 (VLIG…LLVG). A disordered region spans residues 473-494 (KMPRQDTSSQLSLRRRTSYSLA). Over residues 485–494 (LRRRTSYSLA) the composition is skewed to basic residues.

The protein belongs to the major facilitator superfamily. As to expression, widely expressed with highest expression in spleen, lung and testis. Predominantly expressed in erythroid lineages giving rise to erythrocytes and platelets, but absent in lymphoid lineages.

It localises to the cell membrane. The enzyme catalyses sphing-4-enine 1-phosphate(in) = sphing-4-enine 1-phosphate(out). The catalysed reaction is sphinganine 1-phosphate(in) = sphinganine 1-phosphate(out). It carries out the reaction sphinga-4E,14Z-dienine-1-phosphate(in) = sphinga-4E,14Z-dienine-1-phosphate(out). Functionally, lipid transporter that specifically mediates export of sphingosine-1-phosphate in red blood cells and platelets. Sphingosine-1-phosphate is a signaling sphingolipid and its export from red blood cells into in the plasma is required for red blood cell morphology. Sphingosine-1-phosphate export from platelets is required for platelet aggregation and thrombus formation. Mediates the export of different sphingosine-1-phosphate (S1P) species, including S1P(d18:0) (sphinganine 1-phosphate), S1P (d18:1) (sphing-4-enine 1-phosphate) and S1P (d18:2) (sphinga-4E,14Z-dienine-1-phosphate). Release of sphingosine-1-phosphate is facilitated by a proton gradient. In contrast, cations, such as sodium, are not required to drive sphingosine-1-phosphate transport. In addition to export, also able to mediate S1P import. Does not transport lysophosphatidylcholine (LPC). The sequence is that of Sphingosine-1-phosphate transporter MFSD2B from Mus musculus (Mouse).